Consider the following 56-residue polypeptide: Small ribosomal subunit protein uS14 (56 aa).

Phosphoserine is present on serine 9. Arginine 12 is modified (omega-N-methylarginine). Cysteine 21, cysteine 24, cysteine 39, and cysteine 42 together coordinate Zn(2+). Lysine 48 is subject to N6-acetyllysine.

It belongs to the universal ribosomal protein uS14 family. In terms of assembly, component of the 40S small ribosomal subunit. The cofactor is Zn(2+).

The protein localises to the cytoplasm. Its subcellular location is the cytosol. It is found in the rough endoplasmic reticulum. Its function is as follows. Component of the small ribosomal subunit. The ribosome is a large ribonucleoprotein complex responsible for the synthesis of proteins in the cell. This is Small ribosomal subunit protein uS14 (RPS29) from Sus scrofa (Pig).